Reading from the N-terminus, the 1235-residue chain is DNA polymerase catalytic subunit (1235 aa).

Disordered regions lie at residues 640–693 (QGRF…AGRH) and 1098–1134 (AAAP…ASKP). A compositionally biased stretch (basic and acidic residues) spans 650-661 (APKRPAAAREDE). Acidic residues predominate over residues 662–675 (ERPEEEGEDEDERE). Residues 676–691 (EGGGEREPEGARETAG) are compositionally biased toward basic and acidic residues.

It belongs to the DNA polymerase type-B family. In terms of assembly, forms a complex with the ssDNA-binding protein UL29, the DNA polymerase processivity factor, and the alkaline exonuclease. Interacts with the putative helicase-primase complex subunit UL8; this interaction may coordinate leading and lagging strand DNA synthesis at the replication fork.

The protein localises to the host nucleus. The enzyme catalyses DNA(n) + a 2'-deoxyribonucleoside 5'-triphosphate = DNA(n+1) + diphosphate. It catalyses the reaction Endonucleolytic cleavage to 5'-phosphomonoester.. Functionally, replicates viral genomic DNA. The replication complex is composed of six viral proteins: the DNA polymerase, processivity factor, primase, primase-associated factor, helicase, and ssDNA-binding protein. Additionally, the polymerase contains an intrinsic ribonuclease H (RNase H) activity that specifically degrades RNA/DNA heteroduplexes or duplex DNA substrates in the 5' to 3' direction. Therefore, it can catalyze the excision of the RNA primers that initiate the synthesis of Okazaki fragments at a replication fork during viral DNA replication. The chain is DNA polymerase catalytic subunit from Human herpesvirus 1 (strain KOS) (HHV-1).